Here is a 97-residue protein sequence, read N- to C-terminus: Co-chaperonin GroES (97 aa).

Belongs to the GroES chaperonin family. Heptamer of 7 subunits arranged in a ring. Interacts with the chaperonin GroEL.

Its subcellular location is the cytoplasm. Functionally, together with the chaperonin GroEL, plays an essential role in assisting protein folding. The GroEL-GroES system forms a nano-cage that allows encapsulation of the non-native substrate proteins and provides a physical environment optimized to promote and accelerate protein folding. GroES binds to the apical surface of the GroEL ring, thereby capping the opening of the GroEL channel. This chain is Co-chaperonin GroES, found in Bifidobacterium longum (strain NCC 2705).